The sequence spans 138 residues: Large ribosomal subunit protein uL16 (138 aa).

Positions 1-13 are enriched in basic residues; it reads MLQPKRRKYRKEQ. The interval 1–20 is disordered; the sequence is MLQPKRRKYRKEQKGRNTGI.

Belongs to the universal ribosomal protein uL16 family. In terms of assembly, part of the 50S ribosomal subunit.

Binds 23S rRNA and is also seen to make contacts with the A and possibly P site tRNAs. This chain is Large ribosomal subunit protein uL16, found in Ralstonia nicotianae (strain ATCC BAA-1114 / GMI1000) (Ralstonia solanacearum).